The sequence spans 318 residues: Mediator of RNA polymerase II transcription subunit 3 (318 aa).

Residues 134-156 (SAAGITKTSSGNDGNTTGSTANT) are compositionally biased toward polar residues. The disordered stretch occupies residues 134 to 225 (SAAGITKTSS…PSLKQIPNTQ (92 aa)). Residues 192 to 217 (HTGPATAPTTSNSAASAAAAAANTPS) show a composition bias toward low complexity.

The protein belongs to the Mediator complex subunit 3 family. As to quaternary structure, component of the Mediator complex.

The protein resides in the nucleus. Functionally, component of the Mediator complex, a coactivator involved in regulated gene transcription of nearly all RNA polymerase II-dependent genes. Mediator functions as a bridge to convey information from gene-specific regulatory proteins to the basal RNA polymerase II transcription machinery. Mediator is recruited to promoters by direct interactions with regulatory proteins and serves as a scaffold for the assembly of a functional preinitiation complex with RNA polymerase II and the general transcription factors. The polypeptide is Mediator of RNA polymerase II transcription subunit 3 (PGD1) (Kluyveromyces lactis (strain ATCC 8585 / CBS 2359 / DSM 70799 / NBRC 1267 / NRRL Y-1140 / WM37) (Yeast)).